A 140-amino-acid chain; its full sequence is Ribosome-binding factor A (140 aa).

Over residues 1–13 the composition is skewed to basic residues; the sequence is MQKKSSSKSHRAT. Positions 1 to 22 are disordered; the sequence is MQKKSSSKSHRATRGPSQRQLR.

This sequence belongs to the RbfA family. In terms of assembly, monomer. Binds 30S ribosomal subunits, but not 50S ribosomal subunits or 70S ribosomes.

The protein resides in the cytoplasm. In terms of biological role, one of several proteins that assist in the late maturation steps of the functional core of the 30S ribosomal subunit. Associates with free 30S ribosomal subunits (but not with 30S subunits that are part of 70S ribosomes or polysomes). Required for efficient processing of 16S rRNA. May interact with the 5'-terminal helix region of 16S rRNA. The protein is Ribosome-binding factor A of Parvibaculum lavamentivorans (strain DS-1 / DSM 13023 / NCIMB 13966).